We begin with the raw amino-acid sequence, 271 residues long: Shikimate dehydrogenase (NADP(+)) (271 aa).

Residues S14–S16 and T61 each bind shikimate. K65 (proton acceptor) is an active-site residue. N86 and D102 together coordinate shikimate. Residues G126–A130, N149–R154, and M213 each bind NADP(+). Y215 provides a ligand contact to shikimate. Position 238 (G238) interacts with NADP(+).

The protein belongs to the shikimate dehydrogenase family. Homodimer.

The catalysed reaction is shikimate + NADP(+) = 3-dehydroshikimate + NADPH + H(+). It functions in the pathway metabolic intermediate biosynthesis; chorismate biosynthesis; chorismate from D-erythrose 4-phosphate and phosphoenolpyruvate: step 4/7. In terms of biological role, involved in the biosynthesis of the chorismate, which leads to the biosynthesis of aromatic amino acids. Catalyzes the reversible NADPH linked reduction of 3-dehydroshikimate (DHSA) to yield shikimate (SA). This is Shikimate dehydrogenase (NADP(+)) from Histophilus somni (strain 129Pt) (Haemophilus somnus).